The chain runs to 509 residues: O-acetyltransferase anaAT (509 aa).

It belongs to the fumigaclavine B O-acetyltransferase family. Monomer.

It catalyses the reaction (2R,3S,11R)-aszonalenin + acetyl-CoA = (2R,3S,11R)-acetylaszonalenin + CoA. The protein operates within alkaloid biosynthesis. Its function is as follows. O-acetyltransferase; part of the gene cluster that mediates the biosynthesis of the prenylated pyrroloindoline diketopiperazine acetylaszonalenin. The first step in the pathway is the formation of (R)-benzodiazepinedione by condensation of tryptophan and anthranilic acid catalyzed by the non-ribosomal peptide synthetase anaPS. The prenyltransferase anaPT then converts (R)-benzodiazepinedione to aszonalenin in the presence of dimethylallyl diphosphate (DMAPP) via C3-prenylation. The last step in the biosynthesis of acetylaszonalenin via acetylation of aszonalenin at position N1 catalyzed by anaAT. The protein is O-acetyltransferase anaAT of Neosartorya fischeri (strain ATCC 1020 / DSM 3700 / CBS 544.65 / FGSC A1164 / JCM 1740 / NRRL 181 / WB 181) (Aspergillus fischerianus).